A 252-amino-acid chain; its full sequence is Trans-aconitate 2-methyltransferase (252 aa).

Belongs to the methyltransferase superfamily. Tam family.

It is found in the cytoplasm. The catalysed reaction is trans-aconitate + S-adenosyl-L-methionine = (E)-3-(methoxycarbonyl)pent-2-enedioate + S-adenosyl-L-homocysteine. Its function is as follows. Catalyzes the S-adenosylmethionine monomethyl esterification of trans-aconitate. The protein is Trans-aconitate 2-methyltransferase of Escherichia coli (strain UTI89 / UPEC).